The chain runs to 180 residues: ATP-dependent protease subunit HslV (180 aa).

The active site involves Thr-5. Gly-165, Cys-168, and Thr-171 together coordinate Na(+).

This sequence belongs to the peptidase T1B family. HslV subfamily. As to quaternary structure, a double ring-shaped homohexamer of HslV is capped on each side by a ring-shaped HslU homohexamer. The assembly of the HslU/HslV complex is dependent on binding of ATP.

The protein resides in the cytoplasm. It catalyses the reaction ATP-dependent cleavage of peptide bonds with broad specificity.. Its activity is regulated as follows. Allosterically activated by HslU binding. Functionally, protease subunit of a proteasome-like degradation complex believed to be a general protein degrading machinery. In Helicobacter pylori (strain J99 / ATCC 700824) (Campylobacter pylori J99), this protein is ATP-dependent protease subunit HslV.